We begin with the raw amino-acid sequence, 533 residues long: Peptide chain release factor 3 (533 aa).

The tr-type G domain occupies 11–284 (RRRRTFAIIS…ALVGLSPEPL (274 aa)). Residues 20–27 (SHPDAGKT), 92–96 (DTPGH), and 146–149 (NKLD) contribute to the GTP site.

This sequence belongs to the TRAFAC class translation factor GTPase superfamily. Classic translation factor GTPase family. PrfC subfamily.

It is found in the cytoplasm. In terms of biological role, increases the formation of ribosomal termination complexes and stimulates activities of RF-1 and RF-2. It binds guanine nucleotides and has strong preference for UGA stop codons. It may interact directly with the ribosome. The stimulation of RF-1 and RF-2 is significantly reduced by GTP and GDP, but not by GMP. The protein is Peptide chain release factor 3 of Ralstonia nicotianae (strain ATCC BAA-1114 / GMI1000) (Ralstonia solanacearum).